The chain runs to 177 residues: Large ribosomal subunit protein uL6 (177 aa).

The protein belongs to the universal ribosomal protein uL6 family. As to quaternary structure, part of the 50S ribosomal subunit.

This protein binds to the 23S rRNA, and is important in its secondary structure. It is located near the subunit interface in the base of the L7/L12 stalk, and near the tRNA binding site of the peptidyltransferase center. The sequence is that of Large ribosomal subunit protein uL6 from Cupriavidus taiwanensis (strain DSM 17343 / BCRC 17206 / CCUG 44338 / CIP 107171 / LMG 19424 / R1) (Ralstonia taiwanensis (strain LMG 19424)).